We begin with the raw amino-acid sequence, 760 residues long: Molybdenum cofactor sulfurase 2 (760 aa).

Residue Lys-223 is modified to N6-(pyridoxal phosphate)lysine. Residue Cys-389 is part of the active site. In terms of domain architecture, MOSC spans 608 to 758 (QSDDEARTLR…LHCGSPLQVV (151 aa)).

The protein belongs to the class-V pyridoxal-phosphate-dependent aminotransferase family. MOCOS subfamily. Requires pyridoxal 5'-phosphate as cofactor.

It catalyses the reaction Mo-molybdopterin + L-cysteine + AH2 = thio-Mo-molybdopterin + L-alanine + A + H2O. Its function is as follows. Sulfurates the molybdenum cofactor. Sulfation of molybdenum is essential for xanthine dehydrogenase (XDH) and aldehyde oxidase (ADO) enzymes in which molybdenum cofactor is liganded by 1 oxygen and 1 sulfur atom in active form. This Culex quinquefasciatus (Southern house mosquito) protein is Molybdenum cofactor sulfurase 2.